Here is a 314-residue protein sequence, read N- to C-terminus: N-acyl-aromatic-L-amino acid amidohydrolase (carboxylate-forming) B (314 aa).

His-19 and Glu-22 together coordinate Zn(2+). Substrate-binding positions include Arg-63 and 70 to 71 (NR). Zn(2+) is bound at residue His-116. Positions 178 and 289 each coordinate substrate.

It belongs to the AspA/AstE family. Aspartoacylase subfamily. Homotetramer. It depends on Zn(2+) as a cofactor.

It is found in the apical cell membrane. Its subcellular location is the cytoplasm. The enzyme catalyses an N-acyl-aromatic L-alpha-amino acid + H2O = an aromatic L-alpha-amino acid + a carboxylate. The catalysed reaction is an N-acetyl-L-cysteine-S-conjugate + H2O = an S-substituted L-cysteine + acetate. Plays an important role in deacetylating mercapturic acids in kidney proximal tubules. This is N-acyl-aromatic-L-amino acid amidohydrolase (carboxylate-forming) B (acy3.2) from Danio rerio (Zebrafish).